Here is a 314-residue protein sequence, read N- to C-terminus: Aspartate carbamoyltransferase catalytic subunit (314 aa).

Carbamoyl phosphate-binding residues include R55 and T56. Residue K83 coordinates L-aspartate. 3 residues coordinate carbamoyl phosphate: R105, H134, and Q137. L-aspartate is bound by residues R167 and R221. Carbamoyl phosphate is bound by residues G262 and P263.

The protein belongs to the aspartate/ornithine carbamoyltransferase superfamily. ATCase family. As to quaternary structure, heterododecamer (2C3:3R2) of six catalytic PyrB chains organized as two trimers (C3), and six regulatory PyrI chains organized as three dimers (R2).

It carries out the reaction carbamoyl phosphate + L-aspartate = N-carbamoyl-L-aspartate + phosphate + H(+). Its pathway is pyrimidine metabolism; UMP biosynthesis via de novo pathway; (S)-dihydroorotate from bicarbonate: step 2/3. Its function is as follows. Catalyzes the condensation of carbamoyl phosphate and aspartate to form carbamoyl aspartate and inorganic phosphate, the committed step in the de novo pyrimidine nucleotide biosynthesis pathway. The chain is Aspartate carbamoyltransferase catalytic subunit from Corynebacterium urealyticum (strain ATCC 43042 / DSM 7109).